The chain runs to 263 residues: Dihydropteroate synthase type-3 (263 aa).

The 256-residue stretch at Ser-2 to Lys-257 folds into the Pterin-binding domain. Asn-9 contacts Mg(2+). Ser-49 contacts 4-aminobenzoate. Residues Asp-82, Asn-101, and Asp-172 each coordinate (7,8-dihydropterin-6-yl)methyl diphosphate. 6-hydroxymethyl-7,8-dihydropterin is bound by residues Asn-101 and Asp-172. Residue Phe-177 coordinates 4-aminobenzoate. (7,8-dihydropterin-6-yl)methyl diphosphate is bound at residue Lys-211. Lys-211 serves as a coordination point for 6-hydroxymethyl-7,8-dihydropterin. Ser-212 is a 4-aminobenzoate binding site. Arg-245 to His-247 serves as a coordination point for (7,8-dihydropterin-6-yl)methyl diphosphate.

Belongs to the DHPS family. Mg(2+) serves as cofactor.

It catalyses the reaction (7,8-dihydropterin-6-yl)methyl diphosphate + 4-aminobenzoate = 7,8-dihydropteroate + diphosphate. The protein operates within cofactor biosynthesis; tetrahydrofolate biosynthesis; 7,8-dihydrofolate from 2-amino-4-hydroxy-6-hydroxymethyl-7,8-dihydropteridine diphosphate and 4-aminobenzoate: step 1/2. Functionally, catalyzes the condensation of para-aminobenzoate (pABA) with 6-hydroxymethyl-7,8-dihydropterin diphosphate (DHPt-PP) to form 7,8-dihydropteroate (H2Pte), the immediate precursor of folate derivatives. Confers resistance to sulfonamide antibiotics, including sulfamethoxazole (SMX), sulfadiazine and sulfisoxazole. The polypeptide is Dihydropteroate synthase type-3 (Escherichia coli).